The primary structure comprises 638 residues: MSRPTTPLLDKAPIPEALRALPESDLPQLAQELRAELIDVVSTTGGHLGAGLGVVELTVALHHVFDTPHDRIIWDVGHQAYPHKILTGRRDRIRTLRQTGGLSGFTKRTESEYDPFGAAHSSTSISAGLGMAVASDLSGEKRNVIAVIGDGSMSAGMAYEAMNNAGALDARLIVILNDNDMSIAPPTGAMSAYLARLVSGKTYRSVREAAKQVAKKLPKFLQDKARKSEEYARAFFTGGTLFEELGFYYVGPIDGHNLDHLLPILKNVRDTQEGPVLIHVVTQKGKGYAPAEAAADKYHGVNKFDVITGKQSKPPANAPSYTKIFGTSLIEEARHDDRIVAITAAMPSGTGLDLFGEVFPQRTFDVGIAEQHAVTFAAGLASEGYKPFCAIYSTFLQRGYDQVVHDVSIQNLPVRFPIDRAGLVGADGPTHAGSFDTGFLAALPGFVVMAASDEAELRHMVRTAAEYDEGPISFRYPRGDGVGVDLPERGQLLEIGKGRIVREGTKVALLSFGTRLQECLAAADELGAAGLSTTVADARFAKPLDHDLIRRLAREHEVLVMVEEGAVGGFASHVLQFLATDGLLDRGLKVRALTLPDTYQDHGKPDAMYAEAGLDRTGIVHAVFAALGREAVAAPFSA.

Thiamine diphosphate-binding positions include H78 and 119 to 121 (AHS). D150 contributes to the Mg(2+) binding site. Residues 151 to 152 (GS), N179, Y288, and E370 each bind thiamine diphosphate. A Mg(2+)-binding site is contributed by N179.

This sequence belongs to the transketolase family. DXPS subfamily. Homodimer. The cofactor is Mg(2+). Thiamine diphosphate serves as cofactor.

It catalyses the reaction D-glyceraldehyde 3-phosphate + pyruvate + H(+) = 1-deoxy-D-xylulose 5-phosphate + CO2. Its pathway is metabolic intermediate biosynthesis; 1-deoxy-D-xylulose 5-phosphate biosynthesis; 1-deoxy-D-xylulose 5-phosphate from D-glyceraldehyde 3-phosphate and pyruvate: step 1/1. Functionally, catalyzes the acyloin condensation reaction between C atoms 2 and 3 of pyruvate and glyceraldehyde 3-phosphate to yield 1-deoxy-D-xylulose-5-phosphate (DXP). This chain is 1-deoxy-D-xylulose-5-phosphate synthase, found in Brucella anthropi (strain ATCC 49188 / DSM 6882 / CCUG 24695 / JCM 21032 / LMG 3331 / NBRC 15819 / NCTC 12168 / Alc 37) (Ochrobactrum anthropi).